A 132-amino-acid chain; its full sequence is MARVTVEDCVERVPNRFELVLLAAQRARGLSRGEELTVDRDNDKNPVVALREIADQTIVLEQIRSDLVRSLARAPEPEPADEEVMDLIPTEQNIFGLQDVSAEEEASHGTAGMSAEELEAAIEAELGGRARR.

The segment at 100–119 (VSAEEEASHGTAGMSAEELE) is disordered.

The protein belongs to the RNA polymerase subunit omega family. In terms of assembly, the RNAP catalytic core consists of 2 alpha, 1 beta, 1 beta' and 1 omega subunit. When a sigma factor is associated with the core the holoenzyme is formed, which can initiate transcription.

The enzyme catalyses RNA(n) + a ribonucleoside 5'-triphosphate = RNA(n+1) + diphosphate. Functionally, promotes RNA polymerase assembly. Latches the N- and C-terminal regions of the beta' subunit thereby facilitating its interaction with the beta and alpha subunits. This is DNA-directed RNA polymerase subunit omega from Gluconacetobacter diazotrophicus (strain ATCC 49037 / DSM 5601 / CCUG 37298 / CIP 103539 / LMG 7603 / PAl5).